Here is a 362-residue protein sequence, read N- to C-terminus: 2-aminoethylphosphonate--pyruvate transaminase (362 aa).

Position 193 is an N6-(pyridoxal phosphate)lysine (Lys193).

It belongs to the class-V pyridoxal-phosphate-dependent aminotransferase family. PhnW subfamily. As to quaternary structure, homodimer. It depends on pyridoxal 5'-phosphate as a cofactor.

It catalyses the reaction (2-aminoethyl)phosphonate + pyruvate = phosphonoacetaldehyde + L-alanine. In terms of biological role, involved in phosphonate degradation. The chain is 2-aminoethylphosphonate--pyruvate transaminase from Phocaeicola vulgatus (strain ATCC 8482 / DSM 1447 / JCM 5826 / CCUG 4940 / NBRC 14291 / NCTC 11154) (Bacteroides vulgatus).